The sequence spans 282 residues: N-acetylaspartate synthetase (282 aa).

A helical membrane pass occupies residues 103–125 (FLTVMCYVMTKSFTLTFCAPFIL). The 160-residue stretch at 110–269 (VMTKSFTLTF…RSPLERLFFQ (160 aa)) folds into the N-acetyltransferase domain.

This sequence belongs to the NAT8 family.

The protein localises to the cytoplasm. Its subcellular location is the microsome membrane. It localises to the mitochondrion membrane. It is found in the endoplasmic reticulum membrane. The catalysed reaction is L-aspartate + acetyl-CoA = N-acetyl-L-aspartate + CoA + H(+). Its function is as follows. Catalyzes the synthesis of N-acetylaspartate acid (NAA) from L-aspartate and acetyl-CoA. The sequence is that of N-acetylaspartate synthetase (nat8l) from Danio rerio (Zebrafish).